The chain runs to 532 residues: 2,3-bisphosphoglycerate-independent phosphoglycerate mutase (532 aa).

Aspartate 15 and serine 65 together coordinate Mn(2+). The active-site Phosphoserine intermediate is the serine 65. Residues histidine 126, 156–157, arginine 188, arginine 194, 258–261, and lysine 331 each bind substrate; these read RD and RPDR. Residues aspartate 398, histidine 402, aspartate 439, histidine 440, and histidine 457 each contribute to the Mn(2+) site.

The protein belongs to the BPG-independent phosphoglycerate mutase family. Monomer. The cofactor is Mn(2+).

It catalyses the reaction (2R)-2-phosphoglycerate = (2R)-3-phosphoglycerate. The protein operates within carbohydrate degradation; glycolysis; pyruvate from D-glyceraldehyde 3-phosphate: step 3/5. In terms of biological role, catalyzes the interconversion of 2-phosphoglycerate and 3-phosphoglycerate. The polypeptide is 2,3-bisphosphoglycerate-independent phosphoglycerate mutase (Gloeothece citriformis (strain PCC 7424) (Cyanothece sp. (strain PCC 7424))).